Here is a 769-residue protein sequence, read N- to C-terminus: MNRSDAYGYFRNQGREYVITTPRTPARWFNYLFNDTYYTEISQTGQGDSVAFRPHNRTLTRGFRYFYLKDLETGGTWSPLYQPLKTEPEAYECIHSLGTTEIRSVSQEIASSIHVFVPRAGQQEIWTVTLTNTGVKPRSLSLFTAFSLENGGVMGSKCQFDQESQILSSYSFPYHVTYGQKAGCDDHTNVVYVYPDYPADSYDCSQRAFFGGDDIYELPAAVQKGRCSGGQAEAENPLGALQQTITLEPGEQAVRHFVVGCASSLEEIRSSKAELAAKGYAVLLQETEDYWEGITGMFRVETPDDDVNAFMNIWLKKQIVMQTRTNRMSSYCPVRNQLQDALGYALVDPAGAAEYMISVLQGQERSGFIQQWIMTDGSPPKNLCLLKHTDGPVWLIICITALLNQCGDTELLQRQVGFKGSSDSATIYQHLLLAADYMAGETGAHGLCLMGDGDWNDPINGPGRLGRGESAWNTMALVYAIQALIPFCEQLGDTENAEQLNTVARRLADAVNRICWDGGWYVAGFDDDGTPFGTAQDEEGKLFLNTQTWAIMSGIASGERLDQCLAAIDSLDTPFGPRLLEPPFSGWNPKWGRISLKLAGTTENGSVYCHASMFKAFADCIAGRGSEAWQTISRTLPTNPDNPPGQNGQVPIFVPNYYFGLADSPNFGKSSHHVSTGTVGWMLWTTLEYALGIRATANGLKIDPCIPADWPEYTVERKYRSASYRIHVLNPSGISRGTVKVTVDGEAWMAAALPYEAGREYQVTVQLEQ.

The active-site Proton donor is D457.

It belongs to the glycosyl hydrolase 94 family. In terms of assembly, homodimer.

The protein resides in the cytoplasm. It catalyses the reaction 3-O-beta-D-glucosyl-D-glucuronate + phosphate = aldehydo-D-glucuronate + alpha-D-glucose 1-phosphate. It carries out the reaction a 3-O-beta-D-glucosyl-beta-D-glucuronoside + phosphate = a beta-D-glucuronoside + alpha-D-glucose 1-phosphate. In terms of biological role, glycoside phosphorylase that catalyzes the reversible phosphorolysis of 3-O-beta-D-glucosyl-D-glucuronate into D-glucuronic acid and alpha-D-glucose 1-phosphate. Cannot phosphorolyze cellobionic acid and laminaribiose. In the reverse direction, using alpha-D-glucose 1-phosphate as a donor substrate, the enzyme acts on D-glucuronate and its artificial derivative p-nitrophenyl-beta-D-glucuronide. The apparent catalytic efficiency towards p-nitrophenyl-beta-D-glucuronide is approximately 5-fold higher than that towards D-glucuronic acid. Is probably involved in the metabolism of oligosaccharides containing the 3-O-beta-D-glucopyranosyl-beta-D-glucuronide structure released from bacterial and plant acidic carbohydrates. This chain is 3-O-beta-D-glucopyranosyl-beta-D-glucuronide phosphorylase, found in Paenibacillus borealis.